A 457-amino-acid chain; its full sequence is Argininosuccinate lyase (457 aa).

The protein belongs to the lyase 1 family. Argininosuccinate lyase subfamily.

Its subcellular location is the cytoplasm. The catalysed reaction is 2-(N(omega)-L-arginino)succinate = fumarate + L-arginine. It functions in the pathway amino-acid biosynthesis; L-arginine biosynthesis; L-arginine from L-ornithine and carbamoyl phosphate: step 3/3. This Shigella sonnei (strain Ss046) protein is Argininosuccinate lyase.